A 206-amino-acid chain; its full sequence is Large ribosomal subunit protein bL25 (206 aa).

A bL25 domain region spans residues 1 to 91 (MEYRLKAYYR…RPEHVDFFVL (91 aa)). Positions 92 to 206 (SDEPVEMYVP…IKKGKEEEEE (115 aa)) are CTC domain. The interval 184–206 (AEEAAAEVAEPEVIKKGKEEEEE) is disordered. Positions 195-206 (EVIKKGKEEEEE) are enriched in basic and acidic residues.

Belongs to the bacterial ribosomal protein bL25 family. CTC subfamily. In terms of assembly, part of the 50S ribosomal subunit. Contacts the 5S rRNA.

In terms of biological role, this is one of 3 proteins that mediate the attachment of the 5S rRNA onto the large ribosomal subunit. This Thermus thermophilus protein is Large ribosomal subunit protein bL25 (rplY).